A 158-amino-acid chain; its full sequence is Glycine/sarcosine/betaine reductase complex component A1 (158 aa).

Residue U44 is part of the active site. Position 44 (U44) is a non-standard amino acid, selenocysteine.

The protein belongs to the GrdA family. As to quaternary structure, monomer. Component of the glycine, sarcosine and betaine reductase complexes, together with components B and C.

It carries out the reaction acetyl phosphate + [thioredoxin]-disulfide + NH4(+) + H2O = [thioredoxin]-dithiol + glycine + phosphate + H(+). The enzyme catalyses acetyl phosphate + methylamine + [thioredoxin]-disulfide + H2O = sarcosine + [thioredoxin]-dithiol + phosphate + H(+). It catalyses the reaction acetyl phosphate + trimethylamine + [thioredoxin]-disulfide + H2O = glycine betaine + [thioredoxin]-dithiol + phosphate + H(+). Its function is as follows. In the first step of glycine, betaine and sarcosine reductases, the substrate is bound to component PB via a Schiff base intermediate. Then the PB-activated substrate is nucleophilically attacked by the selenol anion of component PA to transform it to a carboxymethylated selenoether and the respective amine. By action of component PC, acetyl phosphate is formed, leaving component PA in its oxidized state. Finally component PA becomes reduced by the thioredoxin system to start a new catalytic cycle of reductive deamination. The protein is Glycine/sarcosine/betaine reductase complex component A1 (grdA1) of Peptoclostridium acidaminophilum (Eubacterium acidaminophilum).